We begin with the raw amino-acid sequence, 69 residues long: Alpha-conotoxin Mr1.7a (69 aa).

The N-terminal stretch at 1-21 (MGMRMMFTVFLLVVLATTVVS) is a signal peptide. Positions 22–49 (FTSNRVLDPAFRRRNAAAKASDLIALNA) are excised as a propeptide. 4-hydroxyproline; in Mr1.7b occurs at positions 52 and 58. 2 disulfide bridges follow: Cys-54/Cys-60 and Cys-55/Cys-68. Positions 56–58 (THP) are lacks the Ser-Xaa-Pro motif that is crucial for potent interaction with nAChR. Cysteine amide is present on Cys-68.

The protein belongs to the conotoxin A superfamily. In terms of processing, two 4-hydroxyprolines have been detected by MS but the assignment of which of the three prolines is modified is uncertain. Expressed by the venom duct.

The protein resides in the secreted. Acts as a co-agonist with PNU (an alpha-7 nAChR-selective allosteric modulator) at the endogenous alpha-7/CHRNA7 nicotinic acetylcholine receptors (nAChR) when tested in human SH-SY5Y neuroblastoma cells. Is the third alpha-conotoxin that acts as an agonist (after alpha-conotoxin SrIA/SrIB). Also acts as an antagonist at human alpha-7 nAChRs heterologously expressed in Xenopus oocytes. Has possibly a distinct nAChR binding mode from other alpha-conotoxins, due to a different three residue motif (lacks the Ser-Xaa-Pro motif). Its function is as follows. Acts as a weak partial agonist at alpha-7/CHRNA7 nicotinic acetylcholine receptors (nAChR) when tested in human SH-SY5Y neuroblastoma cells. Has possibly a distinct nAChR binding mode from other alpha-conotoxins, due to a different three residue motif (lacks the Ser-Xaa-Pro motif). The polypeptide is Alpha-conotoxin Mr1.7a (Conus marmoreus (Marble cone)).